Here is a 113-residue protein sequence, read N- to C-terminus: Hydrogenase maturation factor HybF (113 aa).

2 residues coordinate Ni(2+): His2 and Glu3. The Zn(2+) site is built by Cys73, Cys76, Cys89, and Cys92.

The protein belongs to the HypA/HybF family. HybF subfamily.

Its function is as follows. Involved in the maturation of [NiFe] hydrogenases. Required for nickel insertion into the metal center of the hydrogenase. This is Hydrogenase maturation factor HybF from Morganella morganii (Proteus morganii).